A 122-amino-acid chain; its full sequence is Large ribosomal subunit protein uL14 (122 aa).

It belongs to the universal ribosomal protein uL14 family. Part of the 50S ribosomal subunit. Forms a cluster with proteins L3 and L19. In the 70S ribosome, L14 and L19 interact and together make contacts with the 16S rRNA in bridges B5 and B8.

In terms of biological role, binds to 23S rRNA. Forms part of two intersubunit bridges in the 70S ribosome. The polypeptide is Large ribosomal subunit protein uL14 (Streptococcus gordonii (strain Challis / ATCC 35105 / BCRC 15272 / CH1 / DL1 / V288)).